The chain runs to 254 residues: Ciliary microtubule associated protein 1A (254 aa).

2 STPGR repeats span residues 180 to 205 (PGPAAYRQTDVQVTKFKAPQYTMAAR) and 216 to 241 (PGPGAHSPEKVTMTRPCAPVVSFGIK). The tract at residues 207–226 (EPPGDKTLKPGPGAHSPEKV) is disordered.

This sequence belongs to the CIMAP family. As to quaternary structure, microtubule inner protein component of sperm flagellar doublet microtubules.

The protein localises to the cytoplasm. It is found in the cytoskeleton. The protein resides in the flagellum axoneme. Its function is as follows. Outer dense fibers are filamentous structures located on the outside of the axoneme in the midpiece and principal piece of the mammalian sperm tail. May help to maintain the passive elastic structures and elastic recoil of the sperm tail. In Bos taurus (Bovine), this protein is Ciliary microtubule associated protein 1A (CIMAP1A).